The chain runs to 177 residues: Nucleoside triphosphate/diphosphate phosphatase (177 aa).

Residue arginine 24 is the Proton donor of the active site. Mg(2+) is bound by residues asparagine 88, aspartate 104, aspartate 106, aspartate 108, aspartate 121, and glutamate 124.

This sequence belongs to the Ntdp family. The cofactor is Mg(2+).

The enzyme catalyses a ribonucleoside 5'-triphosphate + H2O = a ribonucleoside 5'-diphosphate + phosphate + H(+). The catalysed reaction is a ribonucleoside 5'-diphosphate + H2O = a ribonucleoside 5'-phosphate + phosphate + H(+). Functionally, has nucleoside phosphatase activity towards nucleoside triphosphates and nucleoside diphosphates. The polypeptide is Nucleoside triphosphate/diphosphate phosphatase (Geobacillus sp. (strain WCH70)).